Here is a 621-residue protein sequence, read N- to C-terminus: MSEEYKKRILIQYENYLLQQDNYVYLATKNSVNWSRNKITPGTAFMNKLVNYLKSDQIQSLLNTNRQDMNIIITDMYEVGEGEKKIVNYVHKYLHNTSDTVMVYSPDADVILLCMLMPVSNLYMLRHNQETSKKFKRNIYDLINIKMLKNNISYYINNNPDFSRENFIVDNINYDLVCISTLFGNDFVPKIETINVKKGFQNIMDAYLKTLIELKERNTYLVRKVNGKFNLSLTFLRRVIKNLLPEENDYIKHNKLYNTYVTAGQIKNVFSYMEINSENIVSVYNEFMREYGDLKNLIKNNGNLTYFETNDQFMNSLKKSICIIMDDQCVNTSYLSNKDTIKLLRNYYIKTREFPRVNINLNTWSHSTDDRRHRNIIRENNYNKYQIEIYKFDKMLDEYYVKFNAQPLDLSRNKIEQFYETYFGIILLDKNKNLTEEANEIMRDYTEGLLWVFDYYFNDKTYVNRWYYQHEKAPLLTHLSMYLDGINHDYFNDLLSGLKKYRVKNIKNFFNPVEQLIYVSPMIPGIIKLLPSNYRSYITSDHLDPFLKTYFIDVEEIVDQLWDQKISDEIDCRSIPYLNKCIIKSIEKPSSSEDKLFLTAIRKVKPTATSHKRSKSIEPDF.

The protein belongs to the 5'-3' exonuclease family.

The protein resides in the virion. This Acanthamoeba polyphaga mimivirus (APMV) protein is Putative 5'-3' exonuclease R528.